The primary structure comprises 343 residues: Flavonoid 3'-O-methyltransferase FOMT (343 aa).

S-adenosyl-L-homocysteine is bound by residues G184, D207, D227, M228, M240, and K241. The active-site Proton acceptor is H245. Residues E273 and E305 contribute to the active site.

This sequence belongs to the class I-like SAM-binding methyltransferase superfamily. Cation-independent O-methyltransferase family. As to quaternary structure, homodimer.

It carries out the reaction 3',5-dihydroxy-3,4',7-trimethoxyflavone + S-adenosyl-L-methionine = 5-hydroxy-3,7,3',4'-tetramethoxyflavone + S-adenosyl-L-homocysteine + H(+). The protein operates within flavonoid metabolism. Inhibited by nickel (NiCl(2) and NiSO(4)) and para-chloromercuribenzoate. In terms of biological role, catalyzes the 3'- or 5'-O-methylation of partially methylated flavonols, but does not accept quercetin or caffeate as substrates for methylation. The polypeptide is Flavonoid 3'-O-methyltransferase FOMT (Chrysosplenium americanum (American golden saxifrage)).